The following is a 566-amino-acid chain: Putative UDP-glucuronate:xylan alpha-glucuronosyltransferase 5 (566 aa).

Residues 17–37 (LILISLSFLGLLLNFKPLFLL) traverse the membrane as a helical; Signal-anchor for type II membrane protein segment. Residues Asp-372 and Asp-374 each coordinate Mn(2+). Substrate-binding positions include 372–374 (DAD), 401–403 (NSG), 428–432 (NGGDQ), and 475–480 (HYLGLK). His-475 is a binding site for Mn(2+).

This sequence belongs to the glycosyltransferase 8 family. Glycogenin subfamily. Requires Mn(2+) as cofactor.

It is found in the golgi apparatus membrane. Functionally, may be involved in the substitutions of the xylan backbone in stem glucuronoxylan. In Arabidopsis thaliana (Mouse-ear cress), this protein is Putative UDP-glucuronate:xylan alpha-glucuronosyltransferase 5 (GUX5).